The sequence spans 139 residues: Single-stranded DNA-binding protein 2 (139 aa).

Residues methionine 1–glutamate 104 enclose the SSB domain. The tract at residues leucine 103–phenylalanine 139 is disordered. Residues lysine 106–asparagine 125 are compositionally biased toward low complexity. The span at asparagine 129–phenylalanine 139 shows a compositional bias: acidic residues.

As to quaternary structure, homotetramer.

The protein is Single-stranded DNA-binding protein 2 (ssb-p) of Staphylococcus aureus (strain COL).